The following is a 462-amino-acid chain: Exodeoxyribonuclease 7 large subunit (462 aa).

This sequence belongs to the XseA family. As to quaternary structure, heterooligomer composed of large and small subunits.

The protein localises to the cytoplasm. It carries out the reaction Exonucleolytic cleavage in either 5'- to 3'- or 3'- to 5'-direction to yield nucleoside 5'-phosphates.. Bidirectionally degrades single-stranded DNA into large acid-insoluble oligonucleotides, which are then degraded further into small acid-soluble oligonucleotides. The polypeptide is Exodeoxyribonuclease 7 large subunit (Pectobacterium carotovorum subsp. carotovorum (strain PC1)).